A 284-amino-acid chain; its full sequence is MEMO1 family protein LS215_2219 (284 aa).

This sequence belongs to the MEMO1 family.

In Saccharolobus islandicus (strain L.S.2.15 / Lassen #1) (Sulfolobus islandicus), this protein is MEMO1 family protein LS215_2219.